The primary structure comprises 531 residues: Light-independent protochlorophyllide reductase subunit B (531 aa).

Asp-36 contributes to the [4Fe-4S] cluster binding site. Residue Asp-287 is the Proton donor of the active site. 422–423 (GL) is a binding site for substrate.

Belongs to the ChlB/BchB/BchZ family. In terms of assembly, protochlorophyllide reductase is composed of three subunits; BchL, BchN and BchB. Forms a heterotetramer of two BchB and two BchN subunits. Requires [4Fe-4S] cluster as cofactor.

It carries out the reaction chlorophyllide a + oxidized 2[4Fe-4S]-[ferredoxin] + 2 ADP + 2 phosphate = protochlorophyllide a + reduced 2[4Fe-4S]-[ferredoxin] + 2 ATP + 2 H2O. The protein operates within porphyrin-containing compound metabolism; bacteriochlorophyll biosynthesis (light-independent). Component of the dark-operative protochlorophyllide reductase (DPOR) that uses Mg-ATP and reduced ferredoxin to reduce ring D of protochlorophyllide (Pchlide) to form chlorophyllide a (Chlide). This reaction is light-independent. The NB-protein (BchN-BchB) is the catalytic component of the complex. In Rhodopseudomonas palustris (strain BisA53), this protein is Light-independent protochlorophyllide reductase subunit B.